Consider the following 520-residue polypeptide: Ribonuclease Y (520 aa).

A helical membrane pass occupies residues 3–23 (IELAIIFIVLAAGAGFLIGNL). Residues 210-273 (TVSVVALPSD…EVAKIALEKL (64 aa)) enclose the KH domain. Residues 336–429 (VYQHSLEVAF…VQAADALSGA (94 aa)) form the HD domain.

This sequence belongs to the RNase Y family.

It localises to the cell membrane. Endoribonuclease that initiates mRNA decay. The chain is Ribonuclease Y from Geobacter sulfurreducens (strain ATCC 51573 / DSM 12127 / PCA).